Reading from the N-terminus, the 383-residue chain is Presenilin-associated rhomboid-like protein A, mitochondrial (383 aa).

Residues 1–37 (MAWRSCFMKWTQINSINASSLCPKSTRLNIHPQQRCG) constitute a mitochondrion transit peptide. A disordered region spans residues 35-75 (RCGFRKTERPSESKKGVQETEAEAGGHNRAVPPKPVPPLPP). Residues 38-83 (FRKTERPSESKKGVQETEAEAGGHNRAVPPKPVPPLPPRRPHQLFR) lie on the Mitochondrial matrix side of the membrane. Residues 39 to 52 (RKTERPSESKKGVQ) show a composition bias toward basic and acidic residues. A compositionally biased stretch (pro residues) spans 66 to 75 (PPKPVPPLPP). The chain crosses the membrane as a helical span at residues 84–104 (PLVFTVGFTGCSFGAAAILQY). The Mitochondrial intermembrane segment spans residues 105 to 168 (ESVKSRVQLA…FWSGLSEGQK (64 aa)). The chain crosses the membrane as a helical span at residues 169–189 (TVTGIIALNTVVLCCWRVPAM). Over 190-219 (QRFLVKYFTSNPASKTRCLPMVLSSFSHYS) the chain is Mitochondrial matrix. Residues 220 to 240 (VIHMVVNMYVLWTFSSSIVSL) traverse the membrane as a helical segment. Residues 241–245 (LGREQ) are Mitochondrial intermembrane-facing. Residues 246–266 (FLALYLSGGVISTFVSYVFKT) form a helical membrane-spanning segment. Topologically, residues 267–271 (ATGRL) are mitochondrial matrix. A helical membrane pass occupies residues 272–292 (GPSLGASGSIMTVLAAVCTKI). Ser-278 acts as the Nucleophile in catalysis. The Mitochondrial intermembrane segment spans residues 293-298 (PEAKLG). The helical transmembrane segment at 299–319 (IVLLPVISFSAGNALKALVAL) threads the bilayer. Over 320-334 (DIAGLVLGWRFFDHA) the chain is Mitochondrial matrix. A helical transmembrane segment spans residues 335–355 (AHLGGALFGVWYIGYGHELIW). The active site involves His-336. Residues 356-383 (RKREPLIKFWHELRNMSPGRPGPGGGGG) are Mitochondrial intermembrane-facing.

This sequence belongs to the peptidase S54 family.

It is found in the mitochondrion inner membrane. The enzyme catalyses Cleaves type-1 transmembrane domains using a catalytic dyad composed of serine and histidine that are contributed by different transmembrane domains.. Its function is as follows. Required for the control of apoptosis during postnatal growth. Essential for proteolytic processing of an antiapoptotic form of opa1 which prevents the release of mitochondrial cytochrome c in response to intrinsic apoptotic signals. This chain is Presenilin-associated rhomboid-like protein A, mitochondrial (parla), found in Danio rerio (Zebrafish).